The chain runs to 161 residues: MSAMGWTLLAAALLAISAQSNGCYIQNCPRGGKRAVETELHSCAACGLGGQCVGPSICCGGLLGGGRGGGCIVGGPLSAPCKRENLHPEPCRPGGGSSCGLEGICAAPGICCTDVTCSIDATCDDVTEKAGVTFSGATGGLANPTGDLLRKVLLLANADLE.

The signal sequence occupies residues methionine 1–glycine 22. Cysteine 23 and cysteine 28 are oxidised to a cystine. Glycine amide is present on glycine 31. Cystine bridges form between cysteine 43–cysteine 91, cysteine 46–cysteine 58, cysteine 52–cysteine 81, cysteine 59–cysteine 71, cysteine 99–cysteine 111, cysteine 105–cysteine 123, and cysteine 112–cysteine 117.

The protein belongs to the vasopressin/oxytocin family.

It is found in the secreted. Functionally, vasotocin is an antidiuretic hormone. The polypeptide is Vasotocin-neurophysin VT (Eptatretus stoutii (Pacific hagfish)).